The chain runs to 438 residues: NADH-quinone oxidoreductase subunit D (438 aa).

Belongs to the complex I 49 kDa subunit family. In terms of assembly, NDH-1 is composed of 14 different subunits. Subunits NuoB, C, D, E, F, and G constitute the peripheral sector of the complex.

The protein resides in the cell membrane. The enzyme catalyses a quinone + NADH + 5 H(+)(in) = a quinol + NAD(+) + 4 H(+)(out). Its function is as follows. NDH-1 shuttles electrons from NADH, via FMN and iron-sulfur (Fe-S) centers, to quinones in the respiratory chain. The immediate electron acceptor for the enzyme in this species is believed to be a menaquinone. Couples the redox reaction to proton translocation (for every two electrons transferred, four hydrogen ions are translocated across the cytoplasmic membrane), and thus conserves the redox energy in a proton gradient. This is NADH-quinone oxidoreductase subunit D from Rhodococcus jostii (strain RHA1).